A 385-amino-acid chain; its full sequence is Alkanesulfonate monooxygenase (385 aa).

The protein belongs to the SsuD family.

It carries out the reaction an alkanesulfonate + FMNH2 + O2 = an aldehyde + FMN + sulfite + H2O + 2 H(+). Its function is as follows. Catalyzes the desulfonation of aliphatic sulfonates. This chain is Alkanesulfonate monooxygenase, found in Burkholderia pseudomallei (strain 1710b).